A 231-amino-acid polypeptide reads, in one-letter code: ATP-dependent dethiobiotin synthetase BioD 2 (231 aa).

13-18 (SVGKTV) is an ATP binding site. Threonine 17 serves as a coordination point for Mg(2+). The active site involves lysine 38. ATP-binding positions include aspartate 55, 112–115 (EGTG), 172–173 (NR), 201–203 (PYL), and glutamine 208. Positions 55 and 112 each coordinate Mg(2+).

The protein belongs to the dethiobiotin synthetase family. Homodimer. Mg(2+) serves as cofactor.

It is found in the cytoplasm. The enzyme catalyses (7R,8S)-7,8-diammoniononanoate + CO2 + ATP = (4R,5S)-dethiobiotin + ADP + phosphate + 3 H(+). It participates in cofactor biosynthesis; biotin biosynthesis; biotin from 7,8-diaminononanoate: step 1/2. In terms of biological role, catalyzes a mechanistically unusual reaction, the ATP-dependent insertion of CO2 between the N7 and N8 nitrogen atoms of 7,8-diaminopelargonic acid (DAPA, also called 7,8-diammoniononanoate) to form a ureido ring. The protein is ATP-dependent dethiobiotin synthetase BioD 2 of Escherichia coli O157:H7.